The primary structure comprises 591 residues: V-type ATP synthase alpha chain (591 aa).

233 to 240 (GPFGAGKT) serves as a coordination point for ATP.

It belongs to the ATPase alpha/beta chains family.

It carries out the reaction ATP + H2O + 4 H(+)(in) = ADP + phosphate + 5 H(+)(out). In terms of biological role, produces ATP from ADP in the presence of a proton gradient across the membrane. The V-type alpha chain is a catalytic subunit. The protein is V-type ATP synthase alpha chain of Streptococcus pyogenes serotype M49 (strain NZ131).